We begin with the raw amino-acid sequence, 449 residues long: Neuraminidase (449 aa).

Residues Met-1 to Lys-6 are Intravirion-facing. Residues Ile-7–Leu-29 traverse the membrane as a helical segment. An involved in apical transport and lipid raft association region spans residues Gly-11–Val-33. The Virion surface portion of the chain corresponds to Ala-30–Leu-449. N-linked (GlcNAc...) asparagine; by host glycans are attached at residues Asn-32, Asn-48, and Asn-66. The hypervariable stalk region stretch occupies residues His-36 to Ser-68. Residues Gln-71 to Leu-449 form a head of neuraminidase region. Disulfide bonds link Cys-72/Cys-397, Cys-104/Cys-109, Cys-163/Cys-210, Cys-212/Cys-217, Cys-258/Cys-271, Cys-260/Cys-269, Cys-298/Cys-317, and Cys-401/Cys-427. Arg-98 serves as a coordination point for substrate. Residues Asn-123 and Asn-126 are each glycosylated (N-linked (GlcNAc...) asparagine; by host). Asp-131 serves as the catalytic Proton donor/acceptor. Residue Arg-132 coordinates substrate. Residues Asn-180 and Asn-214 are each glycosylated (N-linked (GlcNAc...) asparagine; by host). Residue Glu-256–Glu-257 coordinates substrate. Position 272 (Arg-272) interacts with substrate. Residues Asp-273, Gly-277, and Asp-304 each coordinate Ca(2+). Positions Thr-305–Lys-330 are disordered. Arg-351 serves as a coordination point for substrate. Asn-382 carries N-linked (GlcNAc...) asparagine; by host glycosylation. Tyr-386 functions as the Nucleophile in the catalytic mechanism.

The protein belongs to the glycosyl hydrolase 34 family. In terms of assembly, homotetramer. Requires Ca(2+) as cofactor. In terms of processing, N-glycosylated.

The protein resides in the virion membrane. The protein localises to the host apical cell membrane. It catalyses the reaction Hydrolysis of alpha-(2-&gt;3)-, alpha-(2-&gt;6)-, alpha-(2-&gt;8)- glycosidic linkages of terminal sialic acid residues in oligosaccharides, glycoproteins, glycolipids, colominic acid and synthetic substrates.. Inhibited by the neuraminidase inhibitors zanamivir (Relenza) and oseltamivir (Tamiflu). These drugs interfere with the release of progeny virus from infected cells and are effective against all influenza strains. Resistance to neuraminidase inhibitors is quite rare. In terms of biological role, catalyzes the removal of terminal sialic acid residues from viral and cellular glycoconjugates. Cleaves off the terminal sialic acids on the glycosylated HA during virus budding to facilitate virus release. Additionally helps virus spread through the circulation by further removing sialic acids from the cell surface. These cleavages prevent self-aggregation and ensure the efficient spread of the progeny virus from cell to cell. Otherwise, infection would be limited to one round of replication. Described as a receptor-destroying enzyme because it cleaves a terminal sialic acid from the cellular receptors. May facilitate viral invasion of the upper airways by cleaving the sialic acid moieties on the mucin of the airway epithelial cells. Likely to plays a role in the budding process through its association with lipid rafts during intracellular transport. May additionally display a raft-association independent effect on budding. Plays a role in the determination of host range restriction on replication and virulence. Sialidase activity in late endosome/lysosome traffic seems to enhance virus replication. The protein is Neuraminidase of Aves.